We begin with the raw amino-acid sequence, 192 residues long: Xanthine phosphoribosyltransferase (192 aa).

Xanthine contacts are provided by L20 and N27. 128–132 (ANGDA) contacts 5-phospho-alpha-D-ribose 1-diphosphate. K156 serves as a coordination point for xanthine.

This sequence belongs to the purine/pyrimidine phosphoribosyltransferase family. Xpt subfamily. In terms of assembly, homodimer.

The protein localises to the cytoplasm. The catalysed reaction is XMP + diphosphate = xanthine + 5-phospho-alpha-D-ribose 1-diphosphate. It functions in the pathway purine metabolism; XMP biosynthesis via salvage pathway; XMP from xanthine: step 1/1. Functionally, converts the preformed base xanthine, a product of nucleic acid breakdown, to xanthosine 5'-monophosphate (XMP), so it can be reused for RNA or DNA synthesis. This chain is Xanthine phosphoribosyltransferase, found in Staphylococcus aureus (strain JH1).